A 397-amino-acid chain; its full sequence is DNA excision repair protein ERCC-8 (397 aa).

WD repeat units lie at residues 41-81, 97-137, 184-224, 243-282, and 332-371; these read IHGS…RQPH, VHKY…AADV, GHRQ…GCLL, AHNG…NTLV, and GHYK…PVPD. Serine 391, serine 392, and serine 393 each carry phosphoserine.

In terms of assembly, part of the CSA complex (also named DCX(ERCC8) complex), a DCX E3 ubiquitin-protein ligase complex containing ERCC8, RBX1, DDB1 and CUL4A; the CSA complex interacts with RNA polymerase II; upon UV irradiation it interacts with the COP9 signalosome and preferentially with the hyperphosphorylated form of RNA polymerase II. Interacts with ERCC6/CSB (via CIM motif); promoting recruitment to lesion-stalled RNA polymerase II (Pol II). Interacts with KIAA1530/UVSSA. Interacts with a subunit of RNA polymerase II TFIIH.

Its subcellular location is the nucleus. It is found in the chromosome. It localises to the nucleus matrix. The protein operates within protein modification; protein ubiquitination. Substrate-recognition component of the CSA complex, a DCX (DDB1-CUL4-X-box) E3 ubiquitin-protein ligase complex, involved in transcription-coupled nucleotide excision repair (TC-NER), a process during which RNA polymerase II-blocking lesions are rapidly removed from the transcribed strand of active genes. Following recruitment to lesion-stalled RNA polymerase II (Pol II), the CSA complex mediates ubiquitination of Pol II subunit POLR2A/RPB1 at 'Lys-1268', a critical TC-NER checkpoint, governing RNA Pol II stability and initiating DNA damage excision by TFIIH recruitment. The CSA complex also promotes the ubiquitination and subsequent proteasomal degradation of ERCC6/CSB in a UV-dependent manner; ERCC6 degradation is essential for the recovery of RNA synthesis after transcription-coupled repair. Also plays a role in DNA double-strand breaks (DSSBs) repair by non-homologous end joining (NHEJ). The sequence is that of DNA excision repair protein ERCC-8 from Mus musculus (Mouse).